We begin with the raw amino-acid sequence, 508 residues long: Histidine ammonia-lyase (508 aa).

Positions 143–145 (ASG) form a cross-link, 5-imidazolinone (Ala-Gly). Ser-144 carries the post-translational modification 2,3-didehydroalanine (Ser).

It belongs to the PAL/histidase family. Contains an active site 4-methylidene-imidazol-5-one (MIO), which is formed autocatalytically by cyclization and dehydration of residues Ala-Ser-Gly.

It is found in the cytoplasm. The catalysed reaction is L-histidine = trans-urocanate + NH4(+). It functions in the pathway amino-acid degradation; L-histidine degradation into L-glutamate; N-formimidoyl-L-glutamate from L-histidine: step 1/3. The chain is Histidine ammonia-lyase from Klebsiella pneumoniae subsp. pneumoniae (strain ATCC 700721 / MGH 78578).